The following is an 837-amino-acid chain: Protein translocase subunit SecA (837 aa).

ATP-binding positions include Q85, 103-107, and D493; that span reads GEGKT. Residues C821, C823, C832, and H833 each coordinate Zn(2+).

The protein belongs to the SecA family. Monomer and homodimer. Part of the essential Sec protein translocation apparatus which comprises SecA, SecYEG and auxiliary proteins SecDF. Other proteins may also be involved. Zn(2+) is required as a cofactor.

It localises to the cell membrane. It is found in the cytoplasm. The catalysed reaction is ATP + H2O + cellular proteinSide 1 = ADP + phosphate + cellular proteinSide 2.. Its function is as follows. Part of the Sec protein translocase complex. Interacts with the SecYEG preprotein conducting channel. Has a central role in coupling the hydrolysis of ATP to the transfer of proteins into and across the cell membrane, serving as an ATP-driven molecular motor driving the stepwise translocation of polypeptide chains across the membrane. This is Protein translocase subunit SecA from Streptococcus pneumoniae (strain Taiwan19F-14).